The sequence spans 228 residues: E3 ubiquitin-protein ligase RNF114 (228 aa).

The segment at 29 to 68 adopts an RING-type zinc-finger fold; it reads CPVCLEVYEKPVQVPCGHVFCSACLQECLKPKKPVCGVCR. Zn(2+) contacts are provided by cysteine 91 and cysteine 94. The C2HC RNF-type zinc-finger motif lies at 91–110; sequence CHGCRKNFFLSKIRSHVATC. Residue lysine 102 is modified to N6-acetyllysine. The Zn(2+) site is built by histidine 106 and cysteine 110. Lysine 112 is subject to N6-acetyllysine.

In terms of assembly, interacts with XAF1, the interaction increases XAF1 stability and proapoptotic effects, and may regulate IFN signaling. In terms of processing, autoubiquitinated. Polyubiquitinated in the presence of E2 enzymes UBE2D1, UBE2D2 and UBE2D3, but only monoubiquitinated in the presence of UBE2E1. In terms of tissue distribution, expressed in numerous tissues, including skin, CD4 lymphocytes and dendritic cells. Highest levels in testis.

It is found in the cytoplasm. Its subcellular location is the nucleus. It catalyses the reaction S-ubiquitinyl-[E2 ubiquitin-conjugating enzyme]-L-cysteine + [acceptor protein]-L-lysine = [E2 ubiquitin-conjugating enzyme]-L-cysteine + N(6)-ubiquitinyl-[acceptor protein]-L-lysine.. Its pathway is protein modification; protein ubiquitination. In terms of biological role, E3 ubiquitin-protein ligase that promotes the ubiquitination of various substrates. In turn, participates in the regulation of many biological processes including cell cycle, apoptosis, osteoclastogenesis as well as innate or adaptive immunity. Acts as a negative regulator of NF-kappa-B-dependent transcription by promoting the ubiquitination and stabilization of the NF-kappa-B inhibitor TNFAIP3. May promote the ubiquitination of TRAF6 as well. Also acts as a negative regulator of T-cell activation. Inhibits cellular dsRNA responses and interferon production by targeting MAVS component for proteasomal degradation. Ubiquitinates the CDK inhibitor CDKN1A leading to its degradationand probably also CDKN1B and CDKN1C. This activity stimulates cell cycle G1-to-S phase transition and suppresses cellular senescence. May play a role in spermatogenesis. This chain is E3 ubiquitin-protein ligase RNF114 (RNF114), found in Homo sapiens (Human).